Here is a 312-residue protein sequence, read N- to C-terminus: Ankyrin repeat family A protein 2 (312 aa).

ANK repeat units follow at residues 147–179, 180–212, 213–245, 246–278, and 279–312; these read ANSLSAHQLAAQGEMLYLATRIEQENVINHTDE, EGFTPLMWAAAHGQIAVVEFLLQNGADPQLLGK, GRESALSLACSKGYTDIVKMLLDCGVDVNEYDW, NGGTPLLYAVHGNHVKCVKMLLENGADPTIETD, and SGYNSMDLAVALGYRGVQQAIESHLLKLLQNIRE.

In terms of assembly, interacts (via ANK repeats) with CCDC8 (via PxLPxI/L motif); mediates the interaction with the 3M complex which is composed of CCDC8, CUL7 and OBSL1. Interacts (via ANK repeats) with HDAC4 (via PxLPxI/L motif). Interacts (via ANK repeats) with HDAC5 (via PxLPxI/L motif). Interacts (via ANK repeats) with LRP2/megalin (via PxLPxI/L motif). Interacts (via ANK repeats) with RFX7 (via PxLPxI/L motif). Interacts with AHRR. Interacts with NEK6.

It localises to the cytoplasm. The protein resides in the cytoskeleton. Its subcellular location is the membrane. May regulate the interaction between the 3M complex and the histone deacetylases HDAC4 and HDAC5. May also regulate LRP2/megalin. The protein is Ankyrin repeat family A protein 2 (Ankra2) of Mus musculus (Mouse).